The primary structure comprises 343 residues: Mitochondrial amidoxime-reducing component 1 (343 aa).

Topologically, residues 1–25 are mitochondrial matrix; it reads MSNTVFSGAVGPLRAAALSISRHRL. The helical; Signal-anchor for type II membrane protein transmembrane segment at 26–44 threads the bilayer; that stretch reads PLLCAAGLGLTAVASWMWW. The Cytoplasmic portion of the chain corresponds to 45-343; sequence RKRQGEAEDL…DPVYRVTRKG (299 aa). Residues K69, S70, and R94 each coordinate Mo-molybdopterin. The tract at residues 95 to 186 is MOSC N-terminal region; the sequence is HWLVVTEEGN…SSQPYRLVHF (92 aa). One can recognise an MOSC domain in the interval 181–339; the sequence is YRLVHFEADV…IRVGDPVYRV (159 aa). Mo-molybdopterin contacts are provided by S215, R242, R276, C277, and Y321.

Requires Mo-molybdopterin as cofactor.

The protein localises to the mitochondrion outer membrane. The protein resides in the membrane. The catalysed reaction is N(omega)-hydroxy-L-arginine + 2 Fe(II)-[cytochrome b5] + 2 H(+) = L-arginine + 2 Fe(III)-[cytochrome b5] + H2O. Functionally, catalyzes the reduction of N-oxygenated molecules, acting as a counterpart of cytochrome P450 and flavin-containing monooxygenases in metabolic cycles. As a component of prodrug-converting system, reduces a multitude of N-hydroxylated prodrugs particularly amidoximes, leading to increased drug bioavailability. May be involved in mitochondrial N(omega)-hydroxy-L-arginine (NOHA) reduction, regulating endogenous nitric oxide levels and biosynthesis. Postulated to cleave the N-OH bond of N-hydroxylated substrates in concert with electron transfer from NADH to cytochrome b5 reductase then to cytochrome b5, the ultimate electron donor that primes the active site for substrate reduction. The chain is Mitochondrial amidoxime-reducing component 1 (mtarc1) from Xenopus laevis (African clawed frog).